The following is a 160-amino-acid chain: Ribosomal RNA large subunit methyltransferase H (160 aa).

Residues leucine 76, glycine 108, and 127–132 (FGFMTW) each bind S-adenosyl-L-methionine.

The protein belongs to the RNA methyltransferase RlmH family. Homodimer.

It localises to the cytoplasm. It catalyses the reaction pseudouridine(1915) in 23S rRNA + S-adenosyl-L-methionine = N(3)-methylpseudouridine(1915) in 23S rRNA + S-adenosyl-L-homocysteine + H(+). Functionally, specifically methylates the pseudouridine at position 1915 (m3Psi1915) in 23S rRNA. In Bartonella henselae (strain ATCC 49882 / DSM 28221 / CCUG 30454 / Houston 1) (Rochalimaea henselae), this protein is Ribosomal RNA large subunit methyltransferase H.